Reading from the N-terminus, the 181-residue chain is MTVSAQNLVWIDMEMTGLDPEQNVVLEIATIVTDKDLNVLAEGPVIAIHQSDEELAKMDDWNVNTHTNSGLVARVKASQHDEAQAVAETLDFIRQWVPERTSPLCGNSIGQDRRFMVKHMSDLEAFFHYRNVDVSTIKELVRRWQPALLDQFKKSGTHQALDDIRESIAELQFYRSHVFKI.

Residues 8-171 (LVWIDMEMTG…DDIRESIAEL (164 aa)) enclose the Exonuclease domain. Tyr129 is an active-site residue.

It belongs to the oligoribonuclease family.

It localises to the cytoplasm. Functionally, 3'-to-5' exoribonuclease specific for small oligoribonucleotides. This chain is Oligoribonuclease, found in Aeromonas hydrophila subsp. hydrophila (strain ATCC 7966 / DSM 30187 / BCRC 13018 / CCUG 14551 / JCM 1027 / KCTC 2358 / NCIMB 9240 / NCTC 8049).